Here is a 98-residue protein sequence, read N- to C-terminus: Integration host factor subunit alpha (98 aa).

Belongs to the bacterial histone-like protein family. In terms of assembly, heterodimer of an alpha and a beta chain.

In terms of biological role, this protein is one of the two subunits of integration host factor, a specific DNA-binding protein that functions in genetic recombination as well as in transcriptional and translational control. In Idiomarina loihiensis (strain ATCC BAA-735 / DSM 15497 / L2-TR), this protein is Integration host factor subunit alpha.